A 329-amino-acid polypeptide reads, in one-letter code: Eukaryotic translation initiation factor 2 subunit 1 (329 aa).

One can recognise an S1 motif domain in the interval 24-95 (DDLIMVKVNR…QKGYIDLSKR (72 aa)). Serine 59 bears the Phosphoserine; by eIK1, eIK2 and PK4 mark. The segment at 291 to 329 (LDKHDGISSDDDDYNTSDEDDENSSEEDENTSEDEEEED) is disordered. The span at 298 to 329 (SSDDDDYNTSDEDDENSSEEDENTSEDEEEED) shows a compositional bias: acidic residues.

The protein belongs to the eIF-2-alpha family. Post-translationally, phosphorylated at Ser-59 by eIK1 in response to amino acid starvation. Phosphorylates at Ser-59 in schizonts and gametocytes but not in rings and young trophozoites. Phosphorylates at Ser-59 by eIK2 in salivary gland sporozoites but not in midgut and hemocoel sporozoites. Dephosphorylated at Ser-59 by UIS2. Phosphorylation of eIF2alpha subunit of the pre-initiation complex eIF2 inhibits recycling of inactive eIF2-GDP to active eIF2-GTP by limiting the activity of the guanine nucleotide exchange factor eIF2B and thus, inhibits protein translation.

The protein localises to the cytoplasm. It is found in the stress granule. Its function is as follows. Functions in the early steps of protein synthesis by forming a ternary complex with GTP and initiator tRNA. May regulate protein translation in response to amino acid starvation. May regulate protein at various stages of parasite development. The sequence is that of Eukaryotic translation initiation factor 2 subunit 1 from Plasmodium falciparum (isolate 3D7).